Reading from the N-terminus, the 653-residue chain is Brain-enriched guanylate kinase-associated protein (653 aa).

The residue at position 186 (Tyr-186) is a Phosphotyrosine. The disordered stretch occupies residues 241–271 (PGSLSSHLSEASAQDLGFPEGLEKPGSRPPY). Residues 243–252 (SLSSHLSEAS) show a composition bias toward polar residues. Ser-249, Ser-278, Ser-295, and Ser-314 each carry phosphoserine. The disordered stretch occupies residues 288–329 (RHQDRRPSVEGPGSDVGFLQAQNSTDSTAEEEEEEEEDTEAG). The span at 315 to 327 (TAEEEEEEEEDTE) shows a compositional bias: acidic residues. A phosphoserine mark is found at Ser-400 and Ser-427. Arg-435 carries the asymmetric dimethylarginine modification. Residues Ser-523, Ser-533, Ser-535, Ser-558, Ser-560, Ser-564, Ser-613, and Ser-623 each carry the phosphoserine modification. Positions 587-653 (GASGSPEPEL…KAQLYGTLLN (67 aa)) are disordered.

In terms of assembly, interacts with DLG4 and DLGAP1 and forms a ternary complex.

It is found in the cytoplasm. The protein resides in the membrane. In terms of biological role, may sustain the structure of the postsynaptic density (PSD). The chain is Brain-enriched guanylate kinase-associated protein (BEGAIN) from Ovis aries (Sheep).